The chain runs to 358 residues: Vascular endothelial growth factor D (358 aa).

Positions 1 to 21 (MYGEWGMGNILMMFHVYLVQG) are cleaved as a signal peptide. A propeptide spanning residues 22-93 (FRSEHGPVKD…SRSASHRSTR (72 aa)) is cleaved from the precursor. Intrachain disulfides connect cysteine 116–cysteine 158, cysteine 147–cysteine 194, and cysteine 151–cysteine 196. Asparagine 160 and asparagine 190 each carry an N-linked (GlcNAc...) asparagine glycan. Positions 211–358 (SIQTPEEDEC…AQGLYSQENP (148 aa)) are excised as a propeptide. A 1; approximate repeat occupies 227–242 (CPIDMLWDNTKCKCVL). The tract at residues 227-323 (CPIDMLWDNT…PDTCSCEDRC (97 aa)) is 4 X 16 AA repeats of C-X(10)-C-X-C-X(1,3)-C. 3 repeat units span residues 263 to 278 (CGPH…ECVC), 282 to 298 (CPGD…CFEC), and 306 to 323 (CQKH…EDRC). Asparagine 292 carries an N-linked (GlcNAc...) asparagine glycan.

It belongs to the PDGF/VEGF growth factor family. As to quaternary structure, homodimer; non-covalent and antiparallel. Undergoes a complex proteolytic maturation which generates a variety of processed secreted forms with increased activity toward VEGFR-3 and VEGFR-2. VEGF-D first form an antiparallel homodimer linked by disulfide bonds before secretion. The fully processed VEGF-D is composed mostly of two VEGF homology domains (VHDs) bound by non-covalent interactions. Highly expressed in fetal and adult lung.

The protein localises to the secreted. Functionally, growth factor active in angiogenesis, lymphangiogenesis and endothelial cell growth, stimulating their proliferation and migration and also has effects on the permeability of blood vessels. May function in the formation of the venous and lymphatic vascular systems during embryogenesis, and also in the maintenance of differentiated lymphatic endothelium in adults. Binds and activates VEGFR-3 (Flt4) receptor. The sequence is that of Vascular endothelial growth factor D from Mus musculus (Mouse).